A 454-amino-acid chain; its full sequence is CCA-adding enzyme (454 aa).

The ATP site is built by S59 and R62. Residues S59 and R62 each contribute to the CTP site. D71, D73, and D125 together coordinate Mg(2+). ATP-binding residues include H148, K167, and Y176. H148, K167, and Y176 together coordinate CTP.

The protein belongs to the tRNA nucleotidyltransferase/poly(A) polymerase family. Archaeal CCA-adding enzyme subfamily. As to quaternary structure, homodimer. Mg(2+) serves as cofactor.

The enzyme catalyses a tRNA precursor + 2 CTP + ATP = a tRNA with a 3' CCA end + 3 diphosphate. It carries out the reaction a tRNA with a 3' CCA end + 2 CTP + ATP = a tRNA with a 3' CCACCA end + 3 diphosphate. Functionally, catalyzes the addition and repair of the essential 3'-terminal CCA sequence in tRNAs without using a nucleic acid template. Adds these three nucleotides in the order of C, C, and A to the tRNA nucleotide-73, using CTP and ATP as substrates and producing inorganic pyrophosphate. tRNA 3'-terminal CCA addition is required both for tRNA processing and repair. Also involved in tRNA surveillance by mediating tandem CCA addition to generate a CCACCA at the 3' terminus of unstable tRNAs. While stable tRNAs receive only 3'-terminal CCA, unstable tRNAs are marked with CCACCA and rapidly degraded. This Methanosarcina barkeri (strain Fusaro / DSM 804) protein is CCA-adding enzyme.